The following is a 310-amino-acid chain: p-hydroxybenzoic acid efflux pump subunit AaeA (310 aa).

A helical membrane pass occupies residues 12 to 32; that stretch reads AITVALVILAFIAISRAWVFY.

It belongs to the membrane fusion protein (MFP) (TC 8.A.1) family.

It is found in the cell inner membrane. Functionally, forms an efflux pump with AaeB. The polypeptide is p-hydroxybenzoic acid efflux pump subunit AaeA (Enterobacter sp. (strain 638)).